Here is a 540-residue protein sequence, read N- to C-terminus: BTB/POZ domain-containing protein 6-A (540 aa).

The BTB domain occupies 138–208 (ADVHFIVGPP…MYSDEIELAP (71 aa)).

Interacts with cul3. Interacts (via BTB domain) with zbtb16/plzf. Expressed in the developing central nervous system.

The protein localises to the cytoplasm. It localises to the nucleus. Its function is as follows. Adapter protein for the cul3 E3 ubiquitin-protein ligase complex. Promotes the export of zbtb16/plzf from the nucleus to the cytoplasm and targets zbtb16/plzf for ubiquitination and degradation. Up-regulates neurog1 expression and antagonizes zbtb16/plzf, to promote neurogenesis. In Danio rerio (Zebrafish), this protein is BTB/POZ domain-containing protein 6-A (btbd6a).